We begin with the raw amino-acid sequence, 352 residues long: Histidinol-phosphate aminotransferase (352 aa).

Residue lysine 221 is modified to N6-(pyridoxal phosphate)lysine.

It belongs to the class-II pyridoxal-phosphate-dependent aminotransferase family. Histidinol-phosphate aminotransferase subfamily. In terms of assembly, homodimer. Pyridoxal 5'-phosphate serves as cofactor.

It carries out the reaction L-histidinol phosphate + 2-oxoglutarate = 3-(imidazol-4-yl)-2-oxopropyl phosphate + L-glutamate. It functions in the pathway amino-acid biosynthesis; L-histidine biosynthesis; L-histidine from 5-phospho-alpha-D-ribose 1-diphosphate: step 7/9. This is Histidinol-phosphate aminotransferase from Staphylococcus aureus (strain bovine RF122 / ET3-1).